The primary structure comprises 326 residues: Probable cell division protein WhiA (326 aa).

A DNA-binding region (H-T-H motif) is located at residues 275–308 (SLEELGALADPPLTKDAIAGRIRRLLALADKRAR).

This sequence belongs to the WhiA family.

Its function is as follows. Involved in cell division and chromosome segregation. The sequence is that of Probable cell division protein WhiA from Salinispora tropica (strain ATCC BAA-916 / DSM 44818 / JCM 13857 / NBRC 105044 / CNB-440).